A 341-amino-acid polypeptide reads, in one-letter code: Putative NADPH-dependent methylglyoxal reductase GRP2 (341 aa).

Residues K40 and Y171 each coordinate NADP(+).

Belongs to the NAD(P)-dependent epimerase/dehydratase family. Dihydroflavonol-4-reductase subfamily.

Its subcellular location is the cytoplasm. It carries out the reaction (S)-lactaldehyde + NADP(+) = methylglyoxal + NADPH + H(+). Its function is as follows. Catalyzes the irreversible reduction of the cytotoxic compound methylglyoxal (MG, 2-oxopropanal) to (S)-lactaldehyde. MG is synthesized via a bypath of glycolysis from dihydroxyacetone phosphate and is believed to play a role in cell cycle regulation and stress adaptation. The sequence is that of Putative NADPH-dependent methylglyoxal reductase GRP2 (GRP2) from Candida albicans (strain SC5314 / ATCC MYA-2876) (Yeast).